A 412-amino-acid polypeptide reads, in one-letter code: Peptidyl-prolyl cis-trans isomerase FKBP8 (412 aa).

Residues 1-68 (MASCAEPSEP…GQPPAEEAEQ (68 aa)) form a disordered region. A compositionally biased stretch (acidic residues) spans 22-50 (EDFEVLDGVEDAEGEEEEEEEEEEEDDLS). A PPIase FKBP-type domain is found at 120 to 204 (GQVVTVHLQT…CLEVTLKTAV (85 aa)). The Ca(2+) site is built by aspartate 149 and aspartate 151. One copy of the TPR 1 repeat lies at 221–254 (ANRKRECGNAHYQRADFVLAANSYDLAIKAITSS). Residues lysine 249, lysine 271, lysine 273, and lysine 284 each participate in a glycyl lysine isopeptide (Lys-Gly) (interchain with G-Cter in ubiquitin) cross-link. TPR repeat units follow at residues 272-305 (VKCL…QPDN) and 306-339 (IKAL…EPSN). Serine 296 is subject to Phosphoserine. Glycyl lysine isopeptide (Lys-Gly) (interchain with G-Cter in ubiquitin) cross-links involve residues lysine 307, lysine 314, lysine 334, lysine 340, lysine 348, lysine 351, and lysine 352. Residues 390 to 410 (WLFGATAVALGGVALSVVIAA) form a helical membrane-spanning segment.

As to quaternary structure, homomultimers or heteromultimers (Potential). Forms heterodimer with calmodulin. When activated by calmodulin and calcium, interacts with the BH4 domain of BCL2 and weakly with BCL2L1/BCLX isoform Bcl-X(L). Does not bind and inhibit calcineurin. Interacts with ZFYVE27; may negatively regulate ZFYVE27 phosphorylation. In terms of assembly, (Microbial infection) Interacts with hepatitis C/HCV protein NS5A. Requires Ca(2+) as cofactor. In terms of processing, ubiquitinated by PRKN during mitophagy, leading to its degradation and enhancement of mitophagy. Deubiquitinated by USP30. As to expression, widely expressed. Highest levels seen in the brain. Highly abundant in the retina.

The protein resides in the mitochondrion. Its subcellular location is the mitochondrion membrane. It carries out the reaction [protein]-peptidylproline (omega=180) = [protein]-peptidylproline (omega=0). In terms of biological role, constitutively inactive PPiase, which becomes active when bound to calmodulin and calcium. Seems to act as a chaperone for BCL2, targets it to the mitochondria and modulates its phosphorylation state. The BCL2/FKBP8/calmodulin/calcium complex probably interferes with the binding of BCL2 to its targets. The active form of FKBP8 may therefore play a role in the regulation of apoptosis. Involved in the inhibition of viral infection by influenza A viruses (IAV). The protein is Peptidyl-prolyl cis-trans isomerase FKBP8 (FKBP8) of Homo sapiens (Human).